We begin with the raw amino-acid sequence, 313 residues long: MIGQKTLYSFFSPSPARKRHAPSPEPAVQGTGVAGVPEESGDAAAIPAKKAPAGQEEPGTPPSSPLSAEQLDRIQRNKAAALLRLAARNVPVGFGESWKKHLSGEFGKPYFIKLMGFVAEERKHYTVYPPPHQVFTWTQMCDIKDVKVVILGQDPYHGPNQAHGLCFSVQRPVPPPPSLENIYKELSTDIEDFVHPGHGDLSGWAKQGVLLLNAVLTVRAHQANSHKERGWEQFTDAVVSWLNQNSNGLVFLLWGSYAQKKGSAIDRKRHHVLQTAHPSPLSVYRGFFGCRHFSKTNELLQKSGKKPIDWKEL.

The span at 1–12 shows a compositional bias: polar residues; it reads MIGQKTLYSFFS. Residues 1–25 form an interaction with FAM72A region; the sequence is MIGQKTLYSFFSPSPARKRHAPSPE. The mitochondrial localization signal stretch occupies residues 1–29; that stretch reads MIGQKTLYSFFSPSPARKRHAPSPEPAVQ. A disordered region spans residues 1-68; it reads MIGQKTLYSF…GTPPSSPLSA (68 aa). Phosphoserine is present on residues Ser12 and Ser14. Positions 17-19 match the Important for nuclear sorting motif; the sequence is RKR. Ser23 bears the Phosphoserine mark. Residues 43–53 show a composition bias toward low complexity; that stretch reads AAAIPAKKAPA. Thr60 carries the post-translational modification Phosphothreonine. Ser64 bears the Phosphoserine mark. The tract at residues 73–88 is interaction with RPA2; sequence RIQRNKAAALLRLAAR. Gln153 is a uracil binding site. Asp154 serves as the catalytic Proton acceptor. Position 157 (His157) interacts with dsDNA. Phe167 is a uracil binding site. Ser178 provides a ligand contact to dsDNA. Asn213 is a uracil binding site. DsDNA is bound by residues Ser256, His277, Ser279, Ser282, and Arg285. His277 provides a ligand contact to uracil. Lys295 is subject to N6-acetyllysine.

It belongs to the uracil-DNA glycosylase (UDG) superfamily. UNG family. As to quaternary structure, monomer. In terms of assembly, interacts with RPA2 subunit of the RPA trimer; this interaction mediates UNG2 recruitment to RPA-coated single-stranded DNA at stalled replication forks. Interacts with PCNA; this interaction mediates UNG2 recruitment to S-phase replication foci. Interacts (via N-terminus) with FAM72A. (Microbial infection) Interacts with HIV-1 Vpr. Processed by mitochondrial serine or cysteine peptidases to yield a mature dominant form that lacks N-terminal 29 amino acid residues and another minor form that lacks N-terminal 77 amino acid residues. The catalytic activity of UNG1 delta29 is not product-inhibited by AP sites.

Its subcellular location is the mitochondrion. The protein localises to the nucleus. The catalysed reaction is Hydrolyzes single-stranded DNA or mismatched double-stranded DNA and polynucleotides, releasing free uracil.. The enzyme catalyses a 2'-deoxyuridine in single-stranded DNA + H2O = a 2'-deoxyribose 5'-monophosphate in single-stranded DNA + uracil. It catalyses the reaction a 2'-deoxyuridine in double-stranded DNA + H2O = a 2'-deoxyribose 5'-monophosphate in double-stranded DNA + uracil. Its function is as follows. Uracil-DNA glycosylase that hydrolyzes the N-glycosidic bond between uracil and deoxyribose in single- and double-stranded DNA (ssDNA and dsDNA) to release a free uracil residue and form an abasic (apurinic/apyrimidinic; AP) site. Excises uracil residues arising as a result of misincorporation of dUMP residues by DNA polymerase during replication or due to spontaneous or enzymatic deamination of cytosine. Mediates error-free base excision repair (BER) of uracil at replication forks. According to the model, it is recruited by PCNA to S-phase replication forks to remove misincorporated uracil at U:A base mispairs in nascent DNA strands. Via trimeric RPA it is recruited to ssDNA stretches ahead of the polymerase to allow detection and excision of deaminated cytosines prior to replication. The resultant AP sites temporarily stall replication, allowing time to repair the lesion. Mediates mutagenic uracil processing involved in antibody affinity maturation. Processes AICDA-induced U:G base mispairs at variable immunoglobulin (Ig) regions leading to the generation of transversion mutations. Operates at switch sites of Ig constant regions where it mediates Ig isotype class switch recombination. Excises AICDA-induced uracil residues forming AP sites that are subsequently nicked by APEX1 endonuclease. The accumulation of staggered nicks in opposite strands results in double strand DNA breaks that are finally resolved via non-homologous end joining repair pathway. The polypeptide is Uracil-DNA glycosylase (Homo sapiens (Human)).